We begin with the raw amino-acid sequence, 309 residues long: NAD kinase (309 aa).

Residue D89 is the Proton acceptor of the active site. NAD(+)-binding positions include 89–90, 163–164, H174, R191, D193, and 204–209; these read DG, NE, and TAYALS.

The protein belongs to the NAD kinase family. Requires a divalent metal cation as cofactor.

It localises to the cytoplasm. It catalyses the reaction NAD(+) + ATP = ADP + NADP(+) + H(+). In terms of biological role, involved in the regulation of the intracellular balance of NAD and NADP, and is a key enzyme in the biosynthesis of NADP. Catalyzes specifically the phosphorylation on 2'-hydroxyl of the adenosine moiety of NAD to yield NADP. The protein is NAD kinase of Shewanella baltica (strain OS185).